The following is a 114-amino-acid chain: Nucleoid-associated protein SGR_3378 (114 aa).

The protein belongs to the YbaB/EbfC family. Homodimer.

It is found in the cytoplasm. Its subcellular location is the nucleoid. Its function is as follows. Binds to DNA and alters its conformation. May be involved in regulation of gene expression, nucleoid organization and DNA protection. This Streptomyces griseus subsp. griseus (strain JCM 4626 / CBS 651.72 / NBRC 13350 / KCC S-0626 / ISP 5235) protein is Nucleoid-associated protein SGR_3378.